The primary structure comprises 304 residues: Porphobilinogen deaminase (304 aa).

Cysteine 240 bears the S-(dipyrrolylmethanemethyl)cysteine mark.

Belongs to the HMBS family. In terms of assembly, monomer. The cofactor is dipyrromethane.

It carries out the reaction 4 porphobilinogen + H2O = hydroxymethylbilane + 4 NH4(+). The protein operates within porphyrin-containing compound metabolism; protoporphyrin-IX biosynthesis; coproporphyrinogen-III from 5-aminolevulinate: step 2/4. Functionally, tetrapolymerization of the monopyrrole PBG into the hydroxymethylbilane pre-uroporphyrinogen in several discrete steps. The chain is Porphobilinogen deaminase from Xanthomonas campestris pv. campestris (strain B100).